We begin with the raw amino-acid sequence, 147 residues long: Ribonuclease 4 (147 aa).

Residues 1 to 28 (MALQRTHSLLLLLLLTLLGLGLVQPSYG) form the signal peptide. Glutamine 29 is subject to Pyrrolidone carboxylic acid. DUMP-binding residues include arginine 35, histidine 40, lysine 68, asparagine 71, and threonine 72. The active-site Proton acceptor is the histidine 40. Intrachain disulfides connect cysteine 53–cysteine 109, cysteine 67–cysteine 120, cysteine 85–cysteine 135, and cysteine 92–cysteine 99. Histidine 144 functions as the Proton donor in the catalytic mechanism. Phenylalanine 145 is a binding site for dUMP.

The protein belongs to the pancreatic ribonuclease family. Expressed in the cortical and medullary tubules of the kidney, and in the transitional epithelium of the urinary bladder (at protein level).

Its subcellular location is the secreted. Functionally, cleaves preferentially after uridine bases. Has antimicrobial activity against uropathogenic E.coli (UPEC). Probably contributes to urinary tract sterility. In Homo sapiens (Human), this protein is Ribonuclease 4 (RNASE4).